A 141-amino-acid chain; its full sequence is Hemoglobin subunit alpha-A (141 aa).

The Globin domain occupies 1–141 (VLSGSDKTNV…VGNVLTAKYR (141 aa)). Position 58 (histidine 58) interacts with O2. Histidine 87 serves as a coordination point for heme b.

This sequence belongs to the globin family. In terms of assembly, heterotetramer of two alpha chains and two beta chains. In terms of tissue distribution, red blood cells.

Functionally, involved in oxygen transport from the lung to the various peripheral tissues. This chain is Hemoglobin subunit alpha-A (HBAA), found in Vultur gryphus (Andean condor).